Reading from the N-terminus, the 207-residue chain is dTTP/UTP pyrophosphatase (207 aa).

The active-site Proton acceptor is the Asp87.

Belongs to the Maf family. YhdE subfamily. A divalent metal cation serves as cofactor.

It localises to the cytoplasm. It carries out the reaction dTTP + H2O = dTMP + diphosphate + H(+). The catalysed reaction is UTP + H2O = UMP + diphosphate + H(+). Its function is as follows. Nucleoside triphosphate pyrophosphatase that hydrolyzes dTTP and UTP. May have a dual role in cell division arrest and in preventing the incorporation of modified nucleotides into cellular nucleic acids. This chain is dTTP/UTP pyrophosphatase, found in Ralstonia nicotianae (strain ATCC BAA-1114 / GMI1000) (Ralstonia solanacearum).